A 315-amino-acid polypeptide reads, in one-letter code: MSIPEVGKKIRVTVPSTTANLGPGFDCLGAALDLYNEFIFTRIEGGGDRFDLIMESTDGNHLRGGPENLVFRAAQKVWESANMDPFALEARVKLAVPPARGLGSSATAIVAGLIGANAIMNSPLSKEKLLELAIDIEGHPDNVVPSLLGGLCLTARSSSQRWRIIRCEWHYSIKAVVAIPAIRLSTSEARKVMPRNVPISDAVTNMGALTLLLNGLKTGNEELIKEGMFDKLHEPYRWKLIKGGLEVKDAALNAGALGCAISGAGPSILALCKKENGKNVSQAMVKAWEMSGVASRAPFLNVQTTGSQFSTISGK.

97-107 (PPARGLGSSAT) lines the ATP pocket.

This sequence belongs to the GHMP kinase family. Homoserine kinase subfamily.

It localises to the cytoplasm. It carries out the reaction L-homoserine + ATP = O-phospho-L-homoserine + ADP + H(+). Its pathway is amino-acid biosynthesis; L-threonine biosynthesis; L-threonine from L-aspartate: step 4/5. Catalyzes the ATP-dependent phosphorylation of L-homoserine to L-homoserine phosphate. This is Homoserine kinase from Prochlorococcus marinus (strain MIT 9301).